Here is a 401-residue protein sequence, read N- to C-terminus: Imidazolonepropionase (401 aa).

Residues histidine 70 and histidine 72 each coordinate Fe(3+). 2 residues coordinate Zn(2+): histidine 70 and histidine 72. 4-imidazolone-5-propanoate-binding residues include arginine 79, tyrosine 142, and histidine 175. Residue tyrosine 142 participates in N-formimidoyl-L-glutamate binding. Fe(3+) is bound at residue histidine 240. Zn(2+) is bound at residue histidine 240. Glutamine 243 contributes to the 4-imidazolone-5-propanoate binding site. Fe(3+) is bound at residue aspartate 315. Aspartate 315 provides a ligand contact to Zn(2+). The N-formimidoyl-L-glutamate site is built by asparagine 317 and glycine 319. Position 320 (threonine 320) interacts with 4-imidazolone-5-propanoate.

The protein belongs to the metallo-dependent hydrolases superfamily. HutI family. Zn(2+) serves as cofactor. Fe(3+) is required as a cofactor.

It is found in the cytoplasm. It catalyses the reaction 4-imidazolone-5-propanoate + H2O = N-formimidoyl-L-glutamate. Its pathway is amino-acid degradation; L-histidine degradation into L-glutamate; N-formimidoyl-L-glutamate from L-histidine: step 3/3. Its function is as follows. Catalyzes the hydrolytic cleavage of the carbon-nitrogen bond in imidazolone-5-propanoate to yield N-formimidoyl-L-glutamate. It is the third step in the universal histidine degradation pathway. The chain is Imidazolonepropionase from Caulobacter sp. (strain K31).